The primary structure comprises 309 residues: tRNA dimethylallyltransferase (309 aa).

ATP is bound at residue 8–15; the sequence is GPTATGKS. 10–15 lines the substrate pocket; sequence TATGKS. An interaction with substrate tRNA region spans residues 33-36; sequence DSRQ.

The protein belongs to the IPP transferase family. As to quaternary structure, monomer. It depends on Mg(2+) as a cofactor.

The catalysed reaction is adenosine(37) in tRNA + dimethylallyl diphosphate = N(6)-dimethylallyladenosine(37) in tRNA + diphosphate. Its function is as follows. Catalyzes the transfer of a dimethylallyl group onto the adenine at position 37 in tRNAs that read codons beginning with uridine, leading to the formation of N6-(dimethylallyl)adenosine (i(6)A). This Trichodesmium erythraeum (strain IMS101) protein is tRNA dimethylallyltransferase.